The primary structure comprises 1379 residues: DNA-directed RNA polymerase subunit beta'' (1379 aa).

Positions 220, 291, 298, and 301 each coordinate Zn(2+).

This sequence belongs to the RNA polymerase beta' chain family. RpoC2 subfamily. In terms of assembly, in plastids the minimal PEP RNA polymerase catalytic core is composed of four subunits: alpha, beta, beta', and beta''. When a (nuclear-encoded) sigma factor is associated with the core the holoenzyme is formed, which can initiate transcription. Zn(2+) is required as a cofactor.

It is found in the plastid. It carries out the reaction RNA(n) + a ribonucleoside 5'-triphosphate = RNA(n+1) + diphosphate. Functionally, DNA-dependent RNA polymerase catalyzes the transcription of DNA into RNA using the four ribonucleoside triphosphates as substrates. The chain is DNA-directed RNA polymerase subunit beta'' from Cuscuta reflexa (Southern Asian dodder).